We begin with the raw amino-acid sequence, 211 residues long: Small ribosomal subunit protein eS1 (211 aa).

This sequence belongs to the eukaryotic ribosomal protein eS1 family.

This Archaeoglobus fulgidus (strain ATCC 49558 / DSM 4304 / JCM 9628 / NBRC 100126 / VC-16) protein is Small ribosomal subunit protein eS1.